The following is a 1627-amino-acid chain: Pleckstrin homology domain-containing family G member 4B (1627 aa).

Disordered stretches follow at residues 211 to 349 (YSSC…VQPR), 381 to 475 (LTGA…GQAV), 501 to 537 (VSTD…GTGD), 959 to 1008 (SEAA…PAQP), 1049 to 1111 (TTAH…SKGL), and 1124 to 1159 (PLWQ…QVGS). Residues 241–251 (GSASCPDTLTS) are compositionally biased toward polar residues. 2 stretches are compositionally biased toward basic and acidic residues: residues 262-273 (QLRHLPYPERAE) and 310-322 (ERPD…DRPK). Gly residues predominate over residues 465–474 (RPGGHLGGQA). Basic and acidic residues predominate over residues 975-985 (PKHERAQEAMR). A compositionally biased stretch (polar residues) spans 1057–1068 (SACSSEPTQTLA). A compositionally biased stretch (basic residues) spans 1070-1081 (RPRKHPQKKMIK). Composition is skewed to polar residues over residues 1101–1111 (PDHTSVFSKGL) and 1133–1144 (PVTQSRSLSSPS). The 180-residue stretch at 1161–1340 (RLRHIMAEMI…CFQLRHGNDL (180 aa)) folds into the DH domain. Residues 1352–1460 (NLKEQGQLRC…WTDVIGRILW (109 aa)) form the PH domain. Residues 1519–1558 (KGTESQMRGSTAVSSSDHAAPFKRPHSTISDSSTSSSSSQ) form a disordered region. Polar residues predominate over residues 1521 to 1535 (TESQMRGSTAVSSSD). A compositionally biased stretch (low complexity) spans 1545–1558 (STISDSSTSSSSSQ).

In terms of assembly, found in a complex with ARHGEF11 and ARHGEF12; binding to ARHGEF11 and ARHGEF12 enhances CDC42 GEF activity of PLEKHG4B, and PLEKHG4B, in turn, inhibits ARHGEF11- and ARHGEF12-mediated RHOA activation. Interacts with ANXA2; this interaction is required for PLEKHG4B localization to cell-cell adhesions.

The protein localises to the basal cell membrane. Its subcellular location is the cell junction. The protein resides in the nucleus. It localises to the cytoplasm. Functionally, guanine nucleotide exchange factor (GEF) which specifically activates small GTPase CDC42 by exchanging bound GDP for free GTP. Plays a role in actin cytoskeletal remodeling in the late stage of cell-cell junction formation by regulating the contractility of actin filaments, which prompts the conversion from 'open' to 'closed' junctions. The chain is Pleckstrin homology domain-containing family G member 4B from Homo sapiens (Human).